A 595-amino-acid chain; its full sequence is E3 ubiquitin-protein ligase synoviolin B (595 aa).

The helical transmembrane segment at 1 to 19 (MTGASLALTASVVAHAYYL) threads the bilayer. Topologically, residues 20-35 (KNQFYPTVVYLTKSSP) are lumenal. The chain crosses the membrane as a helical span at residues 36–56 (SMAILYIQAFVLVFLLGKFMG). Residues 57 to 92 (KVFFGQLRAAEMEHLLERSWYAVTETCLAFTVFRDD) lie on the Cytoplasmic side of the membrane. Residues 93–113 (FSPRFVALFTLLLFLKCFHWL) traverse the membrane as a helical segment. Topologically, residues 114–129 (AEDRVDFMERSPNISW) are lumenal. Residues 130-150 (LFHFRILALMLLLGVLDAFFV) form a helical membrane-spanning segment. The Cytoplasmic segment spans residues 151-163 (SHAYNSLVTRGAS). A helical membrane pass occupies residues 164 to 184 (VQLVFGFEYAILMTMILAVFI). At 185–218 (KYILHSVDLQSENPWDNKAVYMLYTELFTGFIKV) the chain is on the lumenal side. Residues 219–239 (LLYMAFMTIMVKVHTFPLFAI) traverse the membrane as a helical segment. The interval 230–264 (KVHTFPLFAIRPMYLAMRQFKKAVTDAVMSRRAIR) is interaction with p53/TP53. Topologically, residues 240 to 595 (RPMYLAMRQF…LQKLETTDSQ (356 aa)) are cytoplasmic. Positions 285, 288, 301, 303, 306, 309, 320, and 323 each coordinate Zn(2+). Residues 285-324 (CIICREEMVSGAKRLPCNHIFHTSCLRSWFQRQQTCPTCR) form an RING-type; atypical zinc finger. Residues 335-353 (QPQTPAEQQNQHQAQQQPT) are compositionally biased toward low complexity. Disordered regions lie at residues 335–370 (QPQTPAEQQNQHQAQQQPTPVVPPQPNFPPGMLPPF) and 386–426 (PVPG…PGAA). The segment covering 354–370 (PVVPPQPNFPPGMLPPF) has biased composition (pro residues). Positions 390-408 (APVGNPPDEANPGSSSGSS) are enriched in low complexity. The stretch at 463-494 (EELRAMEGHERQNLEARLQCLQNIHTLLDAAM) forms a coiled coil. Residues 509 to 595 (PPQPPVSSSS…LQKLETTDSQ (87 aa)) form a disordered region. Positions 514–552 (VSSSSSSSASASTEPTTSSVSEPVIDTSSIVTTDSSQQS) are enriched in low complexity.

This sequence belongs to the HRD1 family. In terms of assembly, homodimer.

Its subcellular location is the endoplasmic reticulum membrane. The enzyme catalyses S-ubiquitinyl-[E2 ubiquitin-conjugating enzyme]-L-cysteine + [acceptor protein]-L-lysine = [E2 ubiquitin-conjugating enzyme]-L-cysteine + N(6)-ubiquitinyl-[acceptor protein]-L-lysine.. It functions in the pathway protein modification; protein ubiquitination. Functionally, E3 ubiquitin-protein ligase which accepts ubiquitin specifically from endoplasmic reticulum-associated UBC7 E2 ligase and transfers it to substrates, promoting their degradation. Component of the endoplasmic reticulum quality control (ERQC) system also called ER-associated degradation (ERAD) involved in ubiquitin-dependent degradation of misfolded endoplasmic reticulum proteins. Also promotes the degradation of normal but naturally short-lived proteins. Protects cells from ER stress-induced apoptosis. Sequesters p53 in the cytoplasm and promotes its degradation, thereby negatively regulating its biological function in transcription, cell cycle regulation and apoptosis. This chain is E3 ubiquitin-protein ligase synoviolin B (syvn1-b), found in Xenopus laevis (African clawed frog).